Consider the following 826-residue polypeptide: Outer membrane usher protein YehB (826 aa).

Residues 1–22 (MLRMTPLASAIVALLLGIEAYA) form the signal peptide. A disulfide bridge connects residues cysteine 809 and cysteine 825.

It belongs to the fimbrial export usher family.

It is found in the cell outer membrane. Functionally, part of the yehABCD fimbrial operon. Could contribute to adhesion to various surfaces in specific environmental niches. Probably involved in the export and assembly of fimbrial subunits across the outer membrane. This is Outer membrane usher protein YehB (yehB) from Escherichia coli (strain K12).